A 342-amino-acid chain; its full sequence is S-adenosylmethionine:tRNA ribosyltransferase-isomerase (342 aa).

This sequence belongs to the QueA family. In terms of assembly, monomer.

It localises to the cytoplasm. It carries out the reaction 7-aminomethyl-7-carbaguanosine(34) in tRNA + S-adenosyl-L-methionine = epoxyqueuosine(34) in tRNA + adenine + L-methionine + 2 H(+). Its pathway is tRNA modification; tRNA-queuosine biosynthesis. In terms of biological role, transfers and isomerizes the ribose moiety from AdoMet to the 7-aminomethyl group of 7-deazaguanine (preQ1-tRNA) to give epoxyqueuosine (oQ-tRNA). This chain is S-adenosylmethionine:tRNA ribosyltransferase-isomerase, found in Streptococcus agalactiae serotype III (strain NEM316).